Consider the following 374-residue polypeptide: Protein RecA (374 aa).

Residue 77–84 (GPESSGKT) coordinates ATP. Residues 355–374 (AAKTAAADKSAPAKASEAAA) are disordered.

The protein belongs to the RecA family.

It localises to the cytoplasm. Can catalyze the hydrolysis of ATP in the presence of single-stranded DNA, the ATP-dependent uptake of single-stranded DNA by duplex DNA, and the ATP-dependent hybridization of homologous single-stranded DNAs. It interacts with LexA causing its activation and leading to its autocatalytic cleavage. The sequence is that of Protein RecA from Synechococcus sp. (strain CC9605).